Reading from the N-terminus, the 100-residue chain is Urease subunit gamma (100 aa).

The protein belongs to the urease gamma subunit family. Heterotrimer of UreA (gamma), UreB (beta) and UreC (alpha) subunits. Three heterotrimers associate to form the active enzyme.

Its subcellular location is the cytoplasm. The enzyme catalyses urea + 2 H2O + H(+) = hydrogencarbonate + 2 NH4(+). It participates in nitrogen metabolism; urea degradation; CO(2) and NH(3) from urea (urease route): step 1/1. This is Urease subunit gamma from Cereibacter sphaeroides (strain ATCC 17029 / ATH 2.4.9) (Rhodobacter sphaeroides).